The primary structure comprises 1264 residues: P-type sodium-transporting ATPase4 (1264 aa).

Residues 1 to 12 (MSSQNNNKQGGQ) show a composition bias toward polar residues. The tract at residues 1 to 102 (MSSQNNNKQG…INGEKNDDNN (102 aa)) is disordered. 2 stretches are compositionally biased toward basic and acidic residues: residues 15–42 (NNKKDSDDIKPSVSKEDLINSLKNDELN) and 50–64 (NDMKKNENMNIKKNE). A run of 8 helical transmembrane segments spans residues 165–185 (VWLIFLSQYCSPVVLLLLVAA), 186–206 (VASLALNEVVEGVAIISIVTL), 359–379 (GLIGLIAIIVLVVIISLAVII), 393–413 (FVIIIIGVGFAVSSIPEGLPM), 923–943 (FVCFLLGTNIGEIIYLSVAIV), 1006–1026 (IFEALCVLLSLAFSLYICTGF), 1203–1223 (CSISATLTFLSTCIPGITSIL), and 1226–1246 (TCLLWWQYLLAIFWALLNLFL).

This sequence belongs to the cation transport ATPase (P-type) (TC 3.A.3) family.

The protein localises to the cell membrane. It catalyses the reaction Na(+)(in) + ATP + H2O = Na(+)(out) + ADP + phosphate + H(+). Inhibited by cipargamin and other spiroindolone compounds. Inhibited by 4-cyano-3-methylisoquinoline derivatives MB14 and MB10 but not RK18. Inhibited by (+)-SJ733, a dihydroisoquinolone compound. Its function is as follows. Sodium-exporting ATPase. Required for the extrusion of Na(+) from the intraerythrocytic parasites to maintain a low cytosolic concentration of Na(+). In Plasmodium falciparum (isolate 3D7), this protein is P-type sodium-transporting ATPase4.